Consider the following 259-residue polypeptide: Acyl-[acyl-carrier-protein]--UDP-N-acetylglucosamine O-acyltransferase (259 aa).

It belongs to the transferase hexapeptide repeat family. LpxA subfamily. Homotrimer.

It localises to the cytoplasm. The catalysed reaction is a (3R)-hydroxyacyl-[ACP] + UDP-N-acetyl-alpha-D-glucosamine = a UDP-3-O-[(3R)-3-hydroxyacyl]-N-acetyl-alpha-D-glucosamine + holo-[ACP]. It participates in glycolipid biosynthesis; lipid IV(A) biosynthesis; lipid IV(A) from (3R)-3-hydroxytetradecanoyl-[acyl-carrier-protein] and UDP-N-acetyl-alpha-D-glucosamine: step 1/6. In terms of biological role, involved in the biosynthesis of lipid A, a phosphorylated glycolipid that anchors the lipopolysaccharide to the outer membrane of the cell. This chain is Acyl-[acyl-carrier-protein]--UDP-N-acetylglucosamine O-acyltransferase, found in Nautilia profundicola (strain ATCC BAA-1463 / DSM 18972 / AmH).